The following is a 362-amino-acid chain: ATP synthase F(1) complex catalytic subunit beta, mitochondrial (362 aa).

K14 bears the N6-acetyllysine; alternate mark. K14 is modified (N6-succinyllysine; alternate). K51 carries the post-translational modification N6-acetyllysine. ADP-binding residues include V62, V63, G64, K65, T66, and V67. V62 serves as a coordination point for ATP. Phosphate is bound by residues V62, V63, G64, K65, and T66. 4 residues coordinate ATP: G64, K65, T66, and V67. T66 contacts Mg(2+). Mg(2+) is bound at residue E91. An N6-acetyllysine; alternate mark is found at K112 and K117. N6-succinyllysine; alternate is present on residues K112 and K117. The residue at position 165 (T165) is a Phosphothreonine. The residue at position 279 (K279) is an N6-acetyllysine. A Phosphoserine modification is found at S286. Residues K333 and K338 each carry the N6-acetyllysine modification.

The protein belongs to the ATPase alpha/beta chains family. As to quaternary structure, homotrimer. Component of the ATP synthase complex composed at least of ATP5F1A/subunit alpha, ATP5F1B/subunit beta, ATP5MC1/subunit c (homooctomer), MT-ATP6/subunit a, MT-ATP8/subunit 8, ATP5ME/subunit e, ATP5MF/subunit f, ATP5MG/subunit g, ATP5MK/subunit k, ATP5MJ/subunit j, ATP5F1C/subunit gamma, ATP5F1D/subunit delta, ATP5F1E/subunit epsilon, ATP5PF/subunit F6, ATP5PB/subunit b, ATP5PD/subunit d, ATP5PO/subunit OSCP. ATP synthase complex consists of a soluble F(1) head domain (subunits alpha(3) and beta(3)) - the catalytic core - and a membrane F(0) domain - the membrane proton channel (subunits c, a, 8, e, f, g, k and j). These two domains are linked by a central stalk (subunits gamma, delta, and epsilon) rotating inside the F1 region and a stationary peripheral stalk (subunits F6, b, d, and OSCP). Interacts with PPIF. Interacts with BCL2L1 isoform BCL-X(L); the interaction mediates the association of BCL2L1 isoform BCL-X(L) with the mitochondrial membrane F(1)F(0) ATP synthase and enhances neurons metabolic efficiency. Interacts with CLN5 and PPT1. Interacts with S100A1; this interaction increases F1-ATPase activity. Interacts with MTLN. Interacts with TTC5/STRAP; the interaction results in decreased mitochondrial ATP production.

It is found in the mitochondrion inner membrane. It catalyses the reaction ATP + H2O + 4 H(+)(in) = ADP + phosphate + 5 H(+)(out). Its function is as follows. Catalytic subunit beta, of the mitochondrial membrane ATP synthase complex (F(1)F(0) ATP synthase or Complex V) that produces ATP from ADP in the presence of a proton gradient across the membrane which is generated by electron transport complexes of the respiratory chain. ATP synthase complex consist of a soluble F(1) head domain - the catalytic core - and a membrane F(1) domain - the membrane proton channel. These two domains are linked by a central stalk rotating inside the F(1) region and a stationary peripheral stalk. During catalysis, ATP synthesis in the catalytic domain of F(1) is coupled via a rotary mechanism of the central stalk subunits to proton translocation. In vivo, can only synthesize ATP although its ATP hydrolase activity can be activated artificially in vitro. With the subunit alpha (ATP5F1A), forms the catalytic core in the F(1) domain. The sequence is that of ATP synthase F(1) complex catalytic subunit beta, mitochondrial from Mesocricetus auratus (Golden hamster).